The chain runs to 458 residues: Monomethylamine methyltransferase MtmB2 (458 aa).

Position 202 (Pyl-202) is a non-standard amino acid, pyrrolysine.

Belongs to the monomethylamine methyltransferase family. In terms of assembly, can form a complex with MtmC (MtmC1 or MtmC2).

It catalyses the reaction Co(I)-[methylamine-specific corrinoid protein] + methylamine + H(+) = methyl-Co(III)-[methylamine-specific corrinoid protein] + NH4(+). The protein operates within one-carbon metabolism; methanogenesis from methylamine. Its function is as follows. Catalyzes the transfer of the methyl group from monomethylamine to the corrinoid cofactor of MtmC (MtmC1 or MtmC2). This is Monomethylamine methyltransferase MtmB2 (mtmB2) from Methanosarcina barkeri.